The primary structure comprises 367 residues: WD repeat-containing protein 31 (367 aa).

WD repeat units follow at residues 53–90 (AFQE…AYNW), 94–132 (NVVK…MWDL), 137–175 (QPRQ…LWDV), 179–217 (QSVE…LWDS), 221–264 (QVAH…LWDL), 269–311 (NRIC…IWNQ), and 315–353 (ACLF…LLRM).

This Homo sapiens (Human) protein is WD repeat-containing protein 31 (WDR31).